We begin with the raw amino-acid sequence, 719 residues long: MFKIESIKSQSPQVAIDKERKATKFDINKMFEFLESGKDEAALTKSLMQQIERDTILKTNASYYDLTKDQHRELTAQKIARLASYIEKDAPFFENFQKRLNLIAIVDPQLGTRVGVHLGLFLSAIRGNGTEEQFKYWAFERGAAYLKDVYGCFGMTELAHGSNVAGLETTATFDQKTKEFEINTPHLGATKWWIGGAAHSANHCVVYARLIVSGKDYGVKTFVVPIRDRNHNLHSGVAIGDIGAKMGRDGIDNGWIQLTNVRIPMNYMRSKFTKVTQRQEIVEVPPLEQLAYGALLGGRVTMVTDSFRMAQRFITIALRYSVGRRQFGAKNSSEELKLIDYPLHQRRLLPYLALTYALSISSFDLSQTYDSVLSNLDAAGKSQDFSKLGQAIAGLKNLFCASASLKSTATWYVAQLIDECRQACGGHGYSSYSGFGKAYNDWVVQCTWEGDNNILASNAGRLLCNLLSSCKKKEKKIKGDLSYLNGISNIDKEAICWNKQSMTNLSNSNIDKELFCFNKQVCTVKLINAIQGTIIRLGVRVPNIGSKKSTWDDIAAQRVVLSKLNAVLYMLQHLVLKIKQLGDEEAHKQYLVQIAALFATSQIEMNFASYFLQFKAIDSLEPVADVVSELCLSVRDQVIGLTDSFQFSDYFINSALGSHSGDIYNTYFDTVNNLNNPQVRDGKAAYSEALEAMLRRDPLEVRECFEKSDKVLKKLAPKI.

Positions 716–719 (APKI) match the Microbody targeting signal motif.

It belongs to the acyl-CoA oxidase family. FAD serves as cofactor.

The protein resides in the peroxisome. It carries out the reaction a 2,3-saturated acyl-CoA + O2 = a (2E)-enoyl-CoA + H2O2. The protein operates within lipid metabolism; peroxisomal fatty acid beta-oxidation. The sequence is that of Acyl-coenzyme A oxidase (POX1) from Komagataella pastoris (Yeast).